The following is a 517-amino-acid chain: MHHSFLSANGGIVVSKQTSHGLRLKHLGIKTYHEAIIYMREDCHVCHSEGFEVQTRIQVTLGQRSIIATLNVVTSELLQPGEAGLSDYAWESLHAKEGDEIQVSHPKPLESLSYVHTKIYGKELSYEQMKVIIDDVLSGRLSDVQISAFLAASSAGRLTRTEIMKLTKAMIDSGDRLSWSSPLVVDKHCVGGLPGNRTTLIVVPIVAAFGLMIPKTSSRAITSPAGTADTMETLAPVHLSPQKMRQVVEQENGCIVWGGAVSLSPADDVLIRVERAIDLDSEGQLVASILSKKIATGATHAVIDIPVGPTAKVRNQSMALLLKQLLEEVGNELGLVVRTLLTDGSQPVGHGIGPSLEARDVMAVLQGLPDAPNDLRERALTLAGAALECSSKVPPGLGKSIATQLLDSGQAFKKFQAICEAQGGMRELTKARFTYPVVAAKAGKVSLIDNRKLAKIAKLAGAPKSKSAGIDLHSHVGESVEKGEPLFTIHSESSGELHYACDLLRDKQDIIILGENS.

Belongs to the thymidine/pyrimidine-nucleoside phosphorylase family. Type 2 subfamily.

It carries out the reaction thymidine + phosphate = 2-deoxy-alpha-D-ribose 1-phosphate + thymine. In Legionella pneumophila (strain Paris), this protein is Putative thymidine phosphorylase.